The sequence spans 368 residues: D-alanine--D-alanine ligase (368 aa).

The ATP-grasp domain occupies 145 to 348 (KRLLQGAGLH…YQDLITTLIE (204 aa)). 175 to 230 (ADQLGLPLFIKPANQGSSVGVNKATTEAEFTAAIEEAFSYDHKVLIEAAIKGREIE) lines the ATP pocket. Mg(2+) contacts are provided by Asp-302, Glu-315, and Asn-317.

Belongs to the D-alanine--D-alanine ligase family. Mg(2+) serves as cofactor. The cofactor is Mn(2+).

The protein localises to the cytoplasm. It catalyses the reaction 2 D-alanine + ATP = D-alanyl-D-alanine + ADP + phosphate + H(+). It participates in cell wall biogenesis; peptidoglycan biosynthesis. Its function is as follows. Cell wall formation. The protein is D-alanine--D-alanine ligase of Shouchella clausii (strain KSM-K16) (Alkalihalobacillus clausii).